The sequence spans 926 residues: Storkhead-box protein 2 (926 aa).

6 disordered regions span residues 1 to 32, 338 to 394, 452 to 529, 632 to 693, 724 to 803, and 825 to 926; these read MKKT…RSEK, EEEK…IPGG, EMPF…SYVD, GVKK…SLDK, LKSH…GTMQ, and LAPK…VTSV. A compositionally biased stretch (basic and acidic residues) spans 18 to 32; that stretch reads FSDRASDRMRSRSEK. Residues 353–378 show a composition bias toward basic residues; it reads HSGRSKKSRTHRKSHGKSRSHSKTRV. Residues 379–394 are compositionally biased toward basic and acidic residues; it reads SKGDPSDGSHLDIPGG. The segment covering 463 to 472 has biased composition (basic residues); that stretch reads SHSKVHRSHS. Positions 473–495 are enriched in basic and acidic residues; sequence HTQDRRSRNERSNKAKERSRSMD. Residues 518 to 529 show a composition bias toward polar residues; sequence QDDQTPSQSYVD. 2 stretches are compositionally biased toward basic and acidic residues: residues 632-658 and 684-693; these read GVKK…EESP and HGAEPSSLDK. A compositionally biased stretch (polar residues) spans 746–772; sequence LGTSAAQATPASQRQQESGGNQETSFD. Basic and acidic residues predominate over residues 785–799; sequence GANKNTEEEKNREDV. Composition is skewed to polar residues over residues 847 to 884 and 914 to 926; these read MDSS…QNPA and KPSN…VTSV.

This Macaca fascicularis (Crab-eating macaque) protein is Storkhead-box protein 2 (STOX2).